Here is a 145-residue protein sequence, read N- to C-terminus: D-aminoacyl-tRNA deacylase (145 aa).

The Gly-cisPro motif, important for rejection of L-amino acids motif lies at 137–138; that stretch reads GP.

This sequence belongs to the DTD family. Homodimer.

The protein resides in the cytoplasm. It catalyses the reaction glycyl-tRNA(Ala) + H2O = tRNA(Ala) + glycine + H(+). The enzyme catalyses a D-aminoacyl-tRNA + H2O = a tRNA + a D-alpha-amino acid + H(+). In terms of biological role, an aminoacyl-tRNA editing enzyme that deacylates mischarged D-aminoacyl-tRNAs. Also deacylates mischarged glycyl-tRNA(Ala), protecting cells against glycine mischarging by AlaRS. Acts via tRNA-based rather than protein-based catalysis; rejects L-amino acids rather than detecting D-amino acids in the active site. By recycling D-aminoacyl-tRNA to D-amino acids and free tRNA molecules, this enzyme counteracts the toxicity associated with the formation of D-aminoacyl-tRNA entities in vivo and helps enforce protein L-homochirality. This Pseudomonas putida (strain GB-1) protein is D-aminoacyl-tRNA deacylase.